A 450-amino-acid chain; its full sequence is Phosphoglucosamine mutase (450 aa).

Catalysis depends on S101, which acts as the Phosphoserine intermediate. Positions 101, 240, 242, and 244 each coordinate Mg(2+). S101 is subject to Phosphoserine.

It belongs to the phosphohexose mutase family. It depends on Mg(2+) as a cofactor. In terms of processing, activated by phosphorylation.

It carries out the reaction alpha-D-glucosamine 1-phosphate = D-glucosamine 6-phosphate. In terms of biological role, catalyzes the conversion of glucosamine-6-phosphate to glucosamine-1-phosphate. The sequence is that of Phosphoglucosamine mutase from Streptococcus pneumoniae (strain JJA).